The chain runs to 590 residues: MNIYRTHLCNELREEHINQEVILSGWVYRKRDHGKIIFVDLRDHYGITQLVFNEADNEIFQLISYLKLESVITIKGTVVARDSSTINTTVSTGLIEVVVNHVTIESEANLLPMNIASTQEYPEDIRFKYRFLDLRRDKVKHNIILRSKVIAELRKSMENMGFIEIQTPILTSSSPEGARDYLVPSRIHHGKFYALPQAPQLFKQILMVSGFDKYFQIAPCFRDEDARADRSPGEFYQLDMEMSFVTQEDVFNVIEPVLLNIFSKFSSKTIHKEFPRISYHNAMLYYGSDKPDLRNPLIIQDVTEIFRDSQFNIFNSNIKKGMVVRAIPAPKTANNPRSFFDNKIEFAKTLGAQGLGYITFNDDSSAKGPIAKFLDEERLNKIKSICNLQTGDSVFFVSETEDKAAEFAGEIRTILGTELNLIEPDTFRFCWVVDFPYFKYDKKEKSIGFFHNPFSMPQGGLEALNNQDPLSILAYQYDIVCNGIEISSGAIRNHKLDIMYKAFSIAGYTQEMVDKKFNSLTRAFKFGAPPHGGIAPGIDRMVMLLADATNIREVICFPLNQSGEDLLMGAPSEIDTEHLKLLSLNITKKS.

L-aspartate is bound at residue Glu176. The tract at residues 200 to 203 (QLFK) is aspartate. L-aspartate is bound by residues Arg222 and His451. An ATP-binding site is contributed by 222–224 (RDE). Glu485 contacts ATP. Position 492 (Arg492) interacts with L-aspartate. 537–540 (GIDR) is an ATP binding site.

This sequence belongs to the class-II aminoacyl-tRNA synthetase family. Type 1 subfamily. Homodimer.

The protein resides in the cytoplasm. It carries out the reaction tRNA(Asx) + L-aspartate + ATP = L-aspartyl-tRNA(Asx) + AMP + diphosphate. Its function is as follows. Aspartyl-tRNA synthetase with relaxed tRNA specificity since it is able to aspartylate not only its cognate tRNA(Asp) but also tRNA(Asn). Reaction proceeds in two steps: L-aspartate is first activated by ATP to form Asp-AMP and then transferred to the acceptor end of tRNA(Asp/Asn). The polypeptide is Aspartate--tRNA(Asp/Asn) ligase (Ehrlichia canis (strain Jake)).